A 763-amino-acid chain; its full sequence is Phosphoglycerol transferase I (763 aa).

A run of 4 helical transmembrane segments spans residues 1 to 21, 26 to 46, 77 to 97, and 108 to 128; these read MSELLSVALFLASVLIYAWKA, WWFAATLTVLGLFVILNITLY, ILPGIGIALALVAVFGALGWI, and VGYSLLALLLALGSVDASPAF.

Belongs to the OpgB family.

Its subcellular location is the cell inner membrane. The catalysed reaction is a phosphatidylglycerol + a membrane-derived-oligosaccharide D-glucose = a 1,2-diacyl-sn-glycerol + a membrane-derived-oligosaccharide 6-(glycerophospho)-D-glucose.. Its pathway is glycan metabolism; osmoregulated periplasmic glucan (OPG) biosynthesis. Functionally, transfers a phosphoglycerol residue from phosphatidylglycerol to the membrane-bound nascent glucan backbones. This Salmonella paratyphi B (strain ATCC BAA-1250 / SPB7) protein is Phosphoglycerol transferase I.